The primary structure comprises 347 residues: Phenylalanine--tRNA ligase alpha subunit (347 aa).

Glu-265 contacts Mg(2+).

It belongs to the class-II aminoacyl-tRNA synthetase family. Phe-tRNA synthetase alpha subunit type 1 subfamily. Tetramer of two alpha and two beta subunits. It depends on Mg(2+) as a cofactor.

The protein localises to the cytoplasm. The enzyme catalyses tRNA(Phe) + L-phenylalanine + ATP = L-phenylalanyl-tRNA(Phe) + AMP + diphosphate + H(+). The sequence is that of Phenylalanine--tRNA ligase alpha subunit from Mycolicibacterium gilvum (strain PYR-GCK) (Mycobacterium gilvum (strain PYR-GCK)).